The following is a 328-amino-acid chain: Beta-ketoacyl-[acyl-carrier-protein] synthase III (328 aa).

Active-site residues include cysteine 113 and histidine 253. The ACP-binding stretch occupies residues 254-258 (QANLR). Residue asparagine 283 is part of the active site.

This sequence belongs to the thiolase-like superfamily. FabH family. As to quaternary structure, homodimer.

Its subcellular location is the cytoplasm. The enzyme catalyses malonyl-[ACP] + acetyl-CoA + H(+) = 3-oxobutanoyl-[ACP] + CO2 + CoA. It functions in the pathway lipid metabolism; fatty acid biosynthesis. Catalyzes the condensation reaction of fatty acid synthesis by the addition to an acyl acceptor of two carbons from malonyl-ACP. Catalyzes the first condensation reaction which initiates fatty acid synthesis and may therefore play a role in governing the total rate of fatty acid production. Possesses both acetoacetyl-ACP synthase and acetyl transacylase activities. Its substrate specificity determines the biosynthesis of branched-chain and/or straight-chain of fatty acids. This Fusobacterium nucleatum subsp. nucleatum (strain ATCC 25586 / DSM 15643 / BCRC 10681 / CIP 101130 / JCM 8532 / KCTC 2640 / LMG 13131 / VPI 4355) protein is Beta-ketoacyl-[acyl-carrier-protein] synthase III.